We begin with the raw amino-acid sequence, 108 residues long: DVQMIQSPSSLSASLGDIVTMTCQASQGTSINLNWFQQKPGKAPKLLIYGASILEDGVPSRFSGSRYGTDFTLTISSLEDEDMATYFCLQHSYLPYTFGGGTKLEIKR.

The interval 1 to 23 (DVQMIQSPSSLSASLGDIVTMTC) is framework-1. Cysteines 23 and 88 form a disulfide. The segment at 24–34 (QASQGTSINLN) is complementarity-determining-1. The tract at residues 35–49 (WFQQKPGKAPKLLIY) is framework-2. The tract at residues 50-56 (GASILED) is complementarity-determining-2. Positions 57–88 (GVPSRFSGSRYGTDFTLTISSLEDEDMATYFC) are framework-3. The interval 89-97 (LQHSYLPYT) is complementarity-determining-3. The tract at residues 98–108 (FGGGTKLEIKR) is framework-4.

The chain is Immunoglobulin kappa variable 11-125 from Mus musculus (Mouse).